Here is a 332-residue protein sequence, read N- to C-terminus: 2,7-dihydroxy-5-methyl-1-naphthoate 7-O-methyltransferase (332 aa).

A substrate-binding site is contributed by R11. Residues W133, H153, 175–179 (DVGGG), G177, D200, 227–228 (SF), and 242–243 (SA) contribute to the S-adenosyl-L-methionine site. The active-site Proton acceptor is the H246. D247 is a binding site for substrate.

The protein belongs to the class I-like SAM-binding methyltransferase superfamily. Cation-independent O-methyltransferase family.

The enzyme catalyses 2,7-dihydroxy-5-methyl-1-naphthoate + S-adenosyl-L-methionine = 2-hydroxy-7-methoxy-5-methyl-1-naphthoate + S-adenosyl-L-homocysteine + H(+). It functions in the pathway antibiotic biosynthesis. Functionally, S-adenosyl-L-methionine-dependent O-methyltransferase that catalyzes regiospecific methylation at the 7-hydroxy group of 2,7-dihydroxy-5-methyl-1-naphthoate in the biosynthesis of the naphthoate moiety of the neocarzinostatin chromophore. Also recognizes other dihydroxynaphthoate as substrates and catalyzes their regiospecific O-methylation. The carboxylate and its ortho-hydroxy groups of the substrate appear to be crucial for NcsB1 substrate recognition and binding, and O-methylation takes place only at the free hydroxy group of these dihydroxynaphthoic acids. The chain is 2,7-dihydroxy-5-methyl-1-naphthoate 7-O-methyltransferase from Streptomyces carzinostaticus.